A 213-amino-acid chain; its full sequence is Cysteine dioxygenase (213 aa).

Fe cation is bound by residues His-100, His-102, and His-160. A cross-link (3'-(S-cysteinyl)-tyrosine (Cys-Tyr)) is located at residues 107-177 (CVMKVLKGSL…TNFAISLHLY (71 aa)).

It belongs to the cysteine dioxygenase family. The cofactor is Fe cation. The thioether cross-link between Cys-107 and Tyr-177 plays a structural role through stabilizing the Fe(2+) ion, and prevents the production of highly damaging free hydroxyl radicals by holding the oxygen radical via hydroxyl hydrogen.

It carries out the reaction L-cysteine + O2 = 3-sulfino-L-alanine + H(+). This Ajellomyces capsulatus (strain G186AR / H82 / ATCC MYA-2454 / RMSCC 2432) (Darling's disease fungus) protein is Cysteine dioxygenase (CDO1).